We begin with the raw amino-acid sequence, 429 residues long: MGGEVLNNEGMPLAELKQETIPISRSESSESLNSLTSTRSSSSNRPKTYFCDYDGCDKAFTRPSILTEHQLSVHQGLRAFQCDKCAKSFVKKSHLERHLYTHSDTKPFQCSYCGKGVTTRQQLKRHEVTHTKSFICPEEGCNLRFYKHPQLRAHILSVHLHKLTCPHCNKSFQRPYRLRNHISKHHDPEVENPYQCTFAGCCKEFRIWSQLQSHIKNDHPKLKCPICSKPCVGENGLQMHMIIHDDSLVTKNWKCHICPDMSFSRKHDLLTHYGSIHTEEDIPLELKYKISDIQQLVQDHGVQLGNSKHSNEQDEEKISNRLRKRRKLTENNNVEFLQNEVDLEKRLESGENGLNLLLNTVGRKYRCFYNNCSRTFKTKEKYEKHIDKHKVHELKLKILQEKEENKTLVDQNHKEPFIIQKETQSAGDK.

The segment at 1-45 (MGGEVLNNEGMPLAELKQETIPISRSESSESLNSLTSTRSSSSNR) is disordered. Residues 24–44 (SRSESSESLNSLTSTRSSSSN) show a composition bias toward low complexity. 9 C2H2-type zinc fingers span residues 49–74 (YFCD…LSVH), 80–102 (FQCD…LYTH), 108–130 (FQCS…EVTH), 134–159 (FICP…LSVH), 163–186 (LTCP…SKHH), 194–219 (YQCT…KNDH), 222–244 (LKCP…MIIH), 253–277 (WKCH…GSIH), and 365–389 (YRCF…IDKH). Residues 406 to 416 (KTLVDQNHKEP) are compositionally biased toward basic and acidic residues. Residues 406-429 (KTLVDQNHKEPFIIQKETQSAGDK) form a disordered region.

Its subcellular location is the nucleus. Functionally, interacts with the internal control region (ICR) of approximately 50 bases within the 5S RNA genes, is required for correct transcription of these genes by RNA polymerase III. Also binds the transcribed 5S RNA's. The protein is Transcription factor IIIA (PZF1) of Saccharomyces cerevisiae (strain ATCC 204508 / S288c) (Baker's yeast).